Reading from the N-terminus, the 430-residue chain is Cholecystokinin receptor type A (430 aa).

Topologically, residues 1 to 41 (MDVVDSLFVNGSNITSACELGFENETLFCLDRPRPSKEWQP) are extracellular. 3 N-linked (GlcNAc...) asparagine glycosylation sites follow: asparagine 10, asparagine 13, and asparagine 24. A disulfide bridge links cysteine 18 with cysteine 29. Residues 42–67 (AVQILLYSLIFLLSVLGNTLVITVLI) traverse the membrane as a helical segment. Residues 68–77 (RNKRMRTVTN) are Cytoplasmic-facing. A helical transmembrane segment spans residues 78 to 104 (IFLLSLAVSDLMLCLFCMPFNLIPSLL). Residues 105 to 115 (KDFIFGSAVCK) lie on the Extracellular side of the membrane. Cysteine 114 and cysteine 196 are joined by a disulfide. A helical transmembrane segment spans residues 116-137 (TTTYFMGTSVSVSTFNLVAISL). Residues 138 to 157 (ERYGAICKPLQSRVWQTKSH) lie on the Cytoplasmic side of the membrane. Residues 158–178 (ALKVIAATWCLSFTIMTPYPI) traverse the membrane as a helical segment. Residues 179–210 (YSNLVPFTKNNNQTGNMCRFLLPNDVMQQTWH) lie on the Extracellular side of the membrane. Asparagine 190 is a glycosylation site (N-linked (GlcNAc...) asparagine). A helical membrane pass occupies residues 211 to 234 (TFLLLILFLIPGIVMMVAYGLISL). At 235–315 (ELYQGIKFDA…NLMAKKRVIR (81 aa)) the chain is on the cytoplasmic side. A helical membrane pass occupies residues 316-336 (MLIVIVVLFFLCWMPIFSANA). Topologically, residues 337 to 351 (WRAYDTVSAERHLSG) are extracellular. The helical transmembrane segment at 352–375 (TPISFILLLSYTSSCVNPIIYCFM) threads the bilayer. Residues 376-430 (NKRFRLGFMATFPCCPNPGTPGVRGEMGEEEEGRTTGASLSRYSYSHMSTSAPPP) are Cytoplasmic-facing. Cysteine 389 is lipidated: S-palmitoyl cysteine. Residues 396-430 (PGVRGEMGEEEEGRTTGASLSRYSYSHMSTSAPPP) are disordered. Residues 413 to 430 (ASLSRYSYSHMSTSAPPP) are compositionally biased toward polar residues.

It belongs to the G-protein coupled receptor 1 family.

Its subcellular location is the cell membrane. Functionally, receptor for cholecystokinin. Mediates pancreatic growth and enzyme secretion, smooth muscle contraction of the gall bladder and stomach. Has a 1000-fold higher affinity for CCK rather than for gastrin. It modulates feeding and dopamine-induced behavior in the central and peripheral nervous system. This receptor mediates its action by association with G proteins that activate a phosphatidylinositol-calcium second messenger system. This chain is Cholecystokinin receptor type A (CCKAR), found in Cavia porcellus (Guinea pig).